Consider the following 97-residue polypeptide: YcgL domain-containing protein PA14_47450 (97 aa).

The region spanning 3–87 is the YcgL domain; it reads RICSVYKSPR…GEEEYIEHLP (85 aa).

This chain is YcgL domain-containing protein PA14_47450, found in Pseudomonas aeruginosa (strain UCBPP-PA14).